We begin with the raw amino-acid sequence, 150 residues long: Large ribosomal subunit protein uL13 (150 aa).

It belongs to the universal ribosomal protein uL13 family. As to quaternary structure, part of the 50S ribosomal subunit.

Functionally, this protein is one of the early assembly proteins of the 50S ribosomal subunit, although it is not seen to bind rRNA by itself. It is important during the early stages of 50S assembly. The protein is Large ribosomal subunit protein uL13 of Chlamydia abortus (strain DSM 27085 / S26/3) (Chlamydophila abortus).